We begin with the raw amino-acid sequence, 410 residues long: Heat stress transcription factor A-9 (410 aa).

Residues 1-44 (MGSKKRSPQHPAAAAPPPAVGGGGGGEVSGDGGASTANGPVVPK) are disordered. Positions 20–33 (VGGGGGGEVSGDGG) are enriched in gly residues. The stretch at 171 to 246 (GLEKEVETLK…QLVQQQQQQR (76 aa)) forms a coiled coil. Positions 179–229 (LKRDKALLMQQLVDLRHYQQTSNLEVQNLIERLQVMEQNQQQMMALLAIVV) are hydrophobic repeat HR-A/B. The Nuclear localization signal motif lies at 256–260 (SKKRR). The Nuclear export signal signature appears at 279–290 (AHIVEYLPPVPE).

Belongs to the HSF family. Class A subfamily. Homotrimer. Post-translationally, exhibits temperature-dependent phosphorylation.

The protein resides in the cytoplasm. It localises to the nucleus. Its function is as follows. Transcriptional regulator that specifically binds DNA of heat shock promoter elements (HSE). This Oryza sativa subsp. japonica (Rice) protein is Heat stress transcription factor A-9 (HSFA9).